The following is a 570-amino-acid chain: Formate--tetrahydrofolate ligase (570 aa).

65-72 (TPLGEGKT) serves as a coordination point for ATP.

This sequence belongs to the formate--tetrahydrofolate ligase family.

It carries out the reaction (6S)-5,6,7,8-tetrahydrofolate + formate + ATP = (6R)-10-formyltetrahydrofolate + ADP + phosphate. Its pathway is one-carbon metabolism; tetrahydrofolate interconversion. This is Formate--tetrahydrofolate ligase from Herpetosiphon aurantiacus (strain ATCC 23779 / DSM 785 / 114-95).